A 154-amino-acid chain; its full sequence is MVERELKVRPIRSGTVIDHIQAGQALNVLKILGISGTTGATVSVLMNVSSRKLGKKDIVKVEDRELREDEVNKIALIAPGATINIVRDYAVVEKYAVDLPDVIVGVVRCQNPSCISNTNEPIKPKMLVKGKNPVVLRCFYCDQPLTERIAEYLL.

Residues Cys109, Cys114, Cys138, and Cys141 each coordinate Zn(2+).

Belongs to the PyrI family. Contains catalytic and regulatory chains. Requires Zn(2+) as cofactor.

Involved in allosteric regulation of aspartate carbamoyltransferase. This Methanothrix thermoacetophila (strain DSM 6194 / JCM 14653 / NBRC 101360 / PT) (Methanosaeta thermophila) protein is Aspartate carbamoyltransferase regulatory chain.